Reading from the N-terminus, the 139-residue chain is Proline-rich nuclear receptor coactivator 2 (139 aa).

The interval 1-111 is disordered; it reads MGGGERYNIP…PSPSVLPKPP (111 aa). 2 stretches are compositionally biased toward polar residues: residues 11-36 and 48-59; these read APQT…NSQM and TYNSSSAAWQAM. Residues 60–75 are compositionally biased toward low complexity; it reads QNGGKNKNFPNNQNWN. Over residues 76 to 93 the composition is skewed to polar residues; it reads SSLSSPTLLFKSQTNQNY. An SH3-binding motif is present at residues 99–105; the sequence is SEPPSPS. Over residues 101 to 111 the composition is skewed to pro residues; it reads PPSPSVLPKPP.

This sequence belongs to the PNRC family. PNRC2 subfamily. In terms of assembly, interacts with UPF1/RENT1; preferentially interacts with hyperphosphorylated form. Interacts with DCP1A. Interacts with many nuclear receptors including ESR1, ESRRA, ESRRG, NR3C1/GR, NR5A1, PGR, TR, RAR and RXR.

It is found in the nucleus. The protein localises to the cytoplasm. Its subcellular location is the P-body. Its function is as follows. Involved in nonsense-mediated mRNA decay (NMD) by acting as a bridge between the mRNA decapping complex and the NMD machinery. May act by targeting the NMD machinery to the P-body and recruiting the decapping machinery to aberrant mRNAs. Required for UPF1/RENT1 localization to the P-body. Plays a role in glucocorticoid receptor-mediated mRNA degradation by interacting with the glucocorticoid receptor NR3C1 in a ligand-dependent manner when it is bound to the 5' UTR of target mRNAs and recruiting the RNA helicase UPF1 and the mRNA-decapping enzyme DCP1A, leading to RNA decay. Also acts as a nuclear receptor coactivator. May play a role in controlling the energy balance between energy storage and energy expenditure. The chain is Proline-rich nuclear receptor coactivator 2 (PNRC2) from Bos taurus (Bovine).